The primary structure comprises 252 residues: 5-oxoprolinase subunit A 1 (252 aa).

The protein belongs to the LamB/PxpA family. Forms a complex composed of PxpA, PxpB and PxpC.

It carries out the reaction 5-oxo-L-proline + ATP + 2 H2O = L-glutamate + ADP + phosphate + H(+). Its function is as follows. Catalyzes the cleavage of 5-oxoproline to form L-glutamate coupled to the hydrolysis of ATP to ADP and inorganic phosphate. In Pseudomonas putida (strain ATCC 47054 / DSM 6125 / CFBP 8728 / NCIMB 11950 / KT2440), this protein is 5-oxoprolinase subunit A 1.